The following is a 306-amino-acid chain: Tricarboxylate transporter FUM11 (306 aa).

Solcar repeat units lie at residues 18–98 (SDTL…YQKL), 109–195 (FGIL…LKQV), and 206–292 (IGTV…VVEG). A run of 6 helical transmembrane segments spans residues 24–44 (LVAGSVAGGLEIAITYPAEFA), 67–87 (GLQWYSGCIPFLIGNSVKTSI), 113–133 (LAGFGAGATESLLAVTPSERI), 170–189 (GFWPTTARQSAGSAIRLGSY), 209–229 (VKTFIIGSLAGLITVYLTQPL), and 267–286 (GAVARSLRLVMSGGIVFMVY).

The protein belongs to the mitochondrial carrier (TC 2.A.29) family.

It localises to the mitochondrion inner membrane. It participates in mycotoxin biosynthesis. Functionally, tricarboxylate transporter; part of the gene cluster that mediates the biosynthesis of fumonisins B1 (FB1), B2 (FB2), B3 (FB3), and B4 (FB4), which are carcinogenic mycotoxins. Within the pathway, FUM11 is involved the addition of the tricarballylic moieties to the carbon backbone. FUM11 makes a tricarboxylic acid precursor available for fumonisin biosynthesis via its export from the mitochondria. The biosynthesis starts with the FUM1-catalyzed carbon chain assembly from one molecule of acetyl-CoA, eight molecules of malonyl-CoA, and two molecules of methionine (in S-adenosyl form). The C18 polyketide chain is released from the enzyme by a nucleophilic attack of a carbanion, which is derived from R-carbon of alanine by decarboxylation, on the carbonyl carbon of polyketide acyl chain. This step is catalyzed by the pyridoxal 5'-phosphate-dependent aminoacyl transferase FUM8. The resultant 3-keto intermediate is then stereospecifically reduced to a 3-hydroxyl product by reductase FUM13. Subsequent oxidations at C-10 by the cytochrome P450 monooxygenase FUM2, C-14 and C-15 by FUM6, FUM12 or FUM15, tricarballylic esterification of the hydroxyl groups on C-14 and C-15 by acyltransferase FUM14, and C-5 hydroxylation by 2-keto-glutarate-dependent dioxygenase FUM3 furnish the biosynthesis of fumonisins. The tricarballylic moieties are most likely derived from the citric acid cycle, and their addition to the carbon backbone may involve FUM7, FUM10, FUM11 and FUM14. In Gibberella moniliformis (strain M3125 / FGSC 7600) (Maize ear and stalk rot fungus), this protein is Tricarboxylate transporter FUM11.